The primary structure comprises 77 residues: UPF0346 protein lin1971 (77 aa).

The protein belongs to the UPF0346 family.

This Listeria innocua serovar 6a (strain ATCC BAA-680 / CLIP 11262) protein is UPF0346 protein lin1971.